Reading from the N-terminus, the 684-residue chain is uncharacterized protein (684 aa).

Residues 54-239 (LKYLYNKKDV…LLFNRDFEVV (186 aa)) form the Helicase ATP-binding domain. 67 to 74 (TSTASGKS) lines the ATP pocket. Residues 181-184 (DELH) carry the DEVH box motif. Residues 264–419 (LLRRLIENLV…YMPVNIKNRF (156 aa)) form the Helicase C-terminal domain.

The protein belongs to the helicase family.

This is an uncharacterized protein from Methanocaldococcus jannaschii (strain ATCC 43067 / DSM 2661 / JAL-1 / JCM 10045 / NBRC 100440) (Methanococcus jannaschii).